Consider the following 438-residue polypeptide: Trigger factor (438 aa).

Positions 162 to 247 (GDIVTIDFEG…VKEIKVKELP (86 aa)) constitute a PPIase FKBP-type domain.

The protein belongs to the FKBP-type PPIase family. Tig subfamily.

It localises to the cytoplasm. The catalysed reaction is [protein]-peptidylproline (omega=180) = [protein]-peptidylproline (omega=0). Functionally, involved in protein export. Acts as a chaperone by maintaining the newly synthesized protein in an open conformation. Functions as a peptidyl-prolyl cis-trans isomerase. The polypeptide is Trigger factor (Caldicellulosiruptor saccharolyticus (strain ATCC 43494 / DSM 8903 / Tp8T 6331)).